The sequence spans 1298 residues: MASENKQRPGSPGPTDGPPPTPSPDRDERGALGWGAETEEGGDDPDHDPDHPHDLDDARRDGRAPAAGTDAGEDAGDAVSPRQLALLASMVEEAVRTIPTPDPAASPPRTPAFRADDDDGDEYDDAADAAGDRAPARGREREAPLRGAYPDPTDRLSPRPPAQPPRRRRHGRWRPSASSTSSDSGSSSSSSASSSSSSSDEDEDDDGNDAADHAREARAVGRGPSSAAPAAPGRTPPPPGPPPLSEAAPKPRAAARTPAASAGRIERRRARAAVAGRDATGRFTAGQPRRVELDADATSGAFYARYRDGYVSGEPWPGAGPPPPGRVLYGGLGDSRPGLWGAPEAEEARRRFEASGAPAAVWAPELGDAAQQYALITRLLYTPDAEAMGWLQNPRVVPGDVALDQACFRISGAARNSSSFITGSVARAVPHLGYAMAAGRFGWGLAHAAAAVAMSRRYDRAQKGFLLTSLRRAYAPLLARENAALTGAAGSPGAGADDEGVAAVAAAAPGERAVPAGYGAAGILAALGRLSAAPASPAGGDDPDAARHADADDDAGRRAQAGRVAVECLAACRGILEALAEGFDGDLAAVPGLAGARPASPPRPEGPAGPASPPPPHADAPRLRAWLRELRFVRDALVLMRLRGDLRVAGGSEAAVAAVRAVSLVAGALGPALPRDPRLPSSAAAAAADLLFDNQSLRPLLAAAASAPDAADALAAAAASAAPREGRKRKSPGPARPPGGGGPRPPKTKKSGADAPGSDARAPLPAPAPPSTPPGPEPAPAQPAAPRAAAAQARPRPVAVSRRPAEGPDPLGGWRRQPPGPSHTAAPAAAALEAYCSPRAVAELTDHPLFPVPWRPALMFDPRALASIAARCAGPAPAAQAACGGGDDDDNPHPHGAAGGRLFGPLRASGPLRRMAAWMRQIPDPEDVRVVVLYSPLPGEDLAGGGASGGPPEWSAERGGLSCLLAALANRLCGPDTAAWAGNWTGAPDVSALGAQGVLLLSTRDLAFAGAVEFLGLLASAGDRRLIVVNTVRACDWPADGPAVSRQHAYLACELLPAVQCAVRWPAARDLRRTVLASGRVFGPGVFARVEAAHARLYPDAPPLRLCRGGNVRYRVRTRFGPDTPVPMSPREYRRAVLPALDGRAAASGTTDAMAPGAPDFCEEEAHSHAACARWGLGAPLRPVYVALGREAVRAGPARWRGPRRDFCARALLEPDDDAPPLVLRGDDDGPGALPPAPPGIRWASATGRSGTVLAAAGAVEVLGAEAGLATPPRREVVDWEGAWDEDDGGAFEGDGVL.

Disordered regions lie at residues 1–82 (MASE…VSPR), 94–291 (AVRT…PRRV), 534–554 (PASPAGGDDPDAARHADADDD), 594–620 (AGARPASPPRPEGPAGPASPPPPHADA), 718–826 (AASA…HTAA), and 877–904 (PAAQAACGGGDDDDNPHPHGAAGGRLFG). Residues 11–23 (SPGPTDGPPPTPS) are compositionally biased toward pro residues. Positions 37–47 (ETEEGGDDPDH) are enriched in acidic residues. Positions 48–63 (DPDHPHDLDDARRDGR) are enriched in basic and acidic residues. Pro residues predominate over residues 100-110 (TPDPAASPPRT). A compositionally biased stretch (acidic residues) spans 116-127 (DDDDGDEYDDAA). Over residues 130 to 144 (AGDRAPARGREREAP) the composition is skewed to basic and acidic residues. A compositionally biased stretch (low complexity) spans 174 to 198 (RPSASSTSSDSGSSSSSSASSSSSS). The segment covering 199–209 (SDEDEDDDGND) has biased composition (acidic residues). Positions 210–219 (AADHAREARA) are enriched in basic and acidic residues. Residues 222–233 (RGPSSAAPAAPG) show a composition bias toward low complexity. The span at 234–244 (RTPPPPGPPPL) shows a compositional bias: pro residues. Composition is skewed to low complexity over residues 245–263 (SEAAPKPRAAARTPAASAG) and 272–282 (AAVAGRDATGR). A DNA-binding region spans residues 262-490 (AGRIERRRAR…ENAALTGAAG (229 aa)). The span at 544 to 554 (DAARHADADDD) shows a compositional bias: basic and acidic residues. 2 stretches are compositionally biased toward pro residues: residues 599–618 (ASPPRPEGPAGPASPPPPHA) and 764–783 (LPAPAPPSTPPGPEPAPAQP). Positions 784–802 (AAPRAAAAQARPRPVAVSR) are enriched in low complexity.

It belongs to the herpesviridae ICP4 family. Forms homodimers. Interacts with transcriptional regulator ICP27; this interaction is required for proper incorporation of ICP4 into virions. Interacts with host TBP and host TAF1; these interactions help the stabilization of the pre-nitiation complex on specific promoters. Interacts with host GTF2B. Post-translationally, ADP-ribosylated. The long stretch of Ser is a major site of phosphorylation. Only the phosphorylated forms are capable of interacting with beta or gamma genes.

The protein localises to the host nucleus. The protein resides in the host cytoplasm. It is found in the virion tegument. Plays an essential role in the regulation of viral gene expression by both activating and repressing host RNA polymerase II-mediated transcription. Binds with high affinity to the sequence 5'-ATCGTC-3'. Activates transcription by recruiting a form of the host TFIID to promoters and stabilizing the pre-initiation complex formation. Negatively regulates its own transcription. This immediate early (IE) protein is absolutely necessary for the transition from IE transcription to later viral gene transcription. In Human herpesvirus 1 (strain 17) (HHV-1), this protein is Major viral transcription factor ICP4 (ICP4).